The primary structure comprises 1058 residues: Kinesin-like protein KIN-5D (1058 aa).

The interval 1–43 (MDSIQQRRGGIVSLSPAQTPRSSDKSARESRSSESNSTNRNDK) is disordered. Basic and acidic residues predominate over residues 22-32 (SSDKSARESRS). Residues 48–390 (NVQVILRCRP…LDYAHRAKNI (343 aa)) form the Kinesin motor domain. 134–141 (GQTGTGKT) is a binding site for ATP. Positions 438–517 (QEEAEKKAMA…QANATIKEKE (80 aa)) form a coiled coil.

This sequence belongs to the TRAFAC class myosin-kinesin ATPase superfamily. Kinesin family. KIN-5/BimC subfamily.

The protein resides in the cytoplasm. Its subcellular location is the cytoskeleton. The protein localises to the spindle. Responsible for microtubule translocation. May be important for the organization of phragmoplast-specific arrays of microtubules. Plays an essential role in stabilizing the mitotic spindle. Required during mitotic cytokinesis. The protein is Kinesin-like protein KIN-5D of Arabidopsis thaliana (Mouse-ear cress).